Consider the following 380-residue polypeptide: Chaperone protein DnaJ (380 aa).

The J domain maps to 5–69 (DYYEILGVSK…QKRAHYDQFG (65 aa)). A CR-type zinc finger spans residues 135–217 (GKETDIEIPR…CGGTGRVKKR (83 aa)). 8 residues coordinate Zn(2+): Cys148, Cys151, Cys165, Cys168, Cys191, Cys194, Cys205, and Cys208. CXXCXGXG motif repeat units lie at residues 148–155 (CDTCHGTG), 165–172 (CSYCHGTG), 191–198 (CPYCGGTG), and 205–212 (CTTCGGTG).

Belongs to the DnaJ family. In terms of assembly, homodimer. It depends on Zn(2+) as a cofactor.

The protein resides in the cytoplasm. Participates actively in the response to hyperosmotic and heat shock by preventing the aggregation of stress-denatured proteins and by disaggregating proteins, also in an autonomous, DnaK-independent fashion. Unfolded proteins bind initially to DnaJ; upon interaction with the DnaJ-bound protein, DnaK hydrolyzes its bound ATP, resulting in the formation of a stable complex. GrpE releases ADP from DnaK; ATP binding to DnaK triggers the release of the substrate protein, thus completing the reaction cycle. Several rounds of ATP-dependent interactions between DnaJ, DnaK and GrpE are required for fully efficient folding. Also involved, together with DnaK and GrpE, in the DNA replication of plasmids through activation of initiation proteins. The protein is Chaperone protein DnaJ of Geobacillus sp. (strain WCH70).